The sequence spans 192 residues: Ion-translocating oxidoreductase complex subunit A (192 aa).

Transmembrane regions (helical) follow at residues Ile5–Leu25, Ile39–Val59, Leu72–Val92, Leu102–Leu122, Ile134–Met154, and Ser171–Val191.

The protein belongs to the NqrDE/RnfAE family. The complex is composed of six subunits: RnfA, RnfB, RnfC, RnfD, RnfE and RnfG.

The protein resides in the cell inner membrane. Its function is as follows. Part of a membrane-bound complex that couples electron transfer with translocation of ions across the membrane. This chain is Ion-translocating oxidoreductase complex subunit A, found in Vibrio vulnificus (strain CMCP6).